Consider the following 247-residue polypeptide: Acidic leucine-rich nuclear phosphoprotein 32 family member A (247 aa).

T15 is subject to Phosphothreonine. Position 17 is a phosphoserine (S17). LRR repeat units follow at residues 18–41, 43–64, 65–87, and 89–110; these read DVKELVLDNCRSIEGKIEGLTDEF, ELEFLSTINVGLTSISNLPKLN, KLKKLELSENRISGDLEVLAEKC, and NLKHLNLSGNKIKDLSTIEPLK. Residues 123 to 161 enclose the LRRCT domain; the sequence is CEVTNLNAYRENVFKLLPQVMYLDGYDRDNKEAPDSDVE. A necessary for tumor-suppressive function region spans residues 150-172; it reads RDNKEAPDSDVEGYVEDDDEEDE. A disordered region spans residues 150–247; it reads RDNKEAPDSD…EPDDEGQEDD (98 aa). Residues 157–230 are compositionally biased toward acidic residues; the sequence is DSDVEGYVED…EDEEDAAEEE (74 aa). 2 positions are modified to phosphoserine: S158 and S202. Residues 165 to 247 are interaction with E4F1; the sequence is EDDDEEDEDE…EPDDEGQEDD (83 aa).

Belongs to the ANP32 family. In terms of assembly, component of the SET complex, composed of at least ANP32A, APEX1, HMGB2, NME1, SET and TREX1. Directly interacts with SET. Interacts with ATXN1/SCA1. Interacts with MAP1B. Interacts with ELAVL1. Part of the INHAT (inhibitor of histone acetyltransferases) complex. Interacts with E4F1. Phosphorylated on serine residues, at least in part by casein kinase 2/CK2. Post-translationally, some glutamate residues are glycylated by TTLL8. This modification occurs exclusively on glutamate residues and results in a glycine chain on the gamma-carboxyl group. Widely distributed in the central nervous system, with an abundant expression in the cerebellum.

The protein resides in the nucleus. It is found in the cytoplasm. The protein localises to the endoplasmic reticulum. Multifunctional protein that is involved in the regulation of many processes including tumor suppression, apoptosis, cell cycle progression or transcription. Promotes apoptosis by favouring the activation of caspase-9/CASP9 and allowing apoptosome formation. In addition, plays a role in the modulation of histone acetylation and transcription as part of the INHAT (inhibitor of histone acetyltransferases) complex. Inhibits the histone-acetyltranferase activity of EP300/CREBBP (CREB-binding protein) and EP300/CREBBP-associated factor by histone masking. Preferentially binds to unmodified histone H3 and sterically inhibiting its acetylation and phosphorylation leading to cell growth inhibition. Participates in other biochemical processes such as regulation of mRNA nuclear-to-cytoplasmic translocation and stability by its association with ELAVL1 (Hu-antigen R). Plays a role in E4F1-mediated transcriptional repression as well as inhibition of protein phosphatase 2A. The sequence is that of Acidic leucine-rich nuclear phosphoprotein 32 family member A (Anp32a) from Rattus norvegicus (Rat).